Reading from the N-terminus, the 220-residue chain is MFNSQITSQRSSQVSSQSSATGIESALVPMVVEQTAKGERSYDIYSRLLKERVIFLCGQVEDHMANLIIAQLLFLESESPDKDIYLYINSPGGSVTAGMAIYDTMKFIKPNISTVCIGQAASMGAFLLSGGEKGKRYCLPNARVMIHQPLGGFQGQASDFEIHAKEILFIKDKLNKLMAEHTGQTLDKVSQDTDRDNFLSAEAAVEYGLVDSILEQRNDK.

Serine 122 acts as the Nucleophile in catalysis. Histidine 147 is an active-site residue.

The protein belongs to the peptidase S14 family. In terms of assembly, fourteen ClpP subunits assemble into 2 heptameric rings which stack back to back to give a disk-like structure with a central cavity, resembling the structure of eukaryotic proteasomes.

It localises to the cytoplasm. It carries out the reaction Hydrolysis of proteins to small peptides in the presence of ATP and magnesium. alpha-casein is the usual test substrate. In the absence of ATP, only oligopeptides shorter than five residues are hydrolyzed (such as succinyl-Leu-Tyr-|-NHMec, and Leu-Tyr-Leu-|-Tyr-Trp, in which cleavage of the -Tyr-|-Leu- and -Tyr-|-Trp bonds also occurs).. Functionally, cleaves peptides in various proteins in a process that requires ATP hydrolysis. Has a chymotrypsin-like activity. Plays a major role in the degradation of misfolded proteins. The protein is ATP-dependent Clp protease proteolytic subunit of Colwellia psychrerythraea (strain 34H / ATCC BAA-681) (Vibrio psychroerythus).